A 484-amino-acid polypeptide reads, in one-letter code: Aldehyde dehydrogenase family 3 member A2 (484 aa).

The Cytoplasmic portion of the chain corresponds to 1-463 (MERQVLRLRQ…FLLKQFNKGR (463 aa)). 185-190 (GNTAVG) is an NAD(+) binding site. Residues E207 and C241 contribute to the active site. S293 carries the phosphoserine modification. The helical transmembrane segment at 464–484 (LGMLLFVCLVAVAAVIVKDQL) threads the bilayer. The short motif at 481–484 (KDQL) is the Prevents secretion from ER element.

This sequence belongs to the aldehyde dehydrogenase family. Homodimer.

It is found in the membrane. The protein localises to the microsome membrane. The protein resides in the endoplasmic reticulum membrane. The catalysed reaction is an aldehyde + NAD(+) + H2O = a carboxylate + NADH + 2 H(+). It carries out the reaction a fatty aldehyde + NAD(+) + H2O = a fatty acid + NADH + 2 H(+). It catalyses the reaction hexadecanoate + NADH + 2 H(+) = hexadecanal + NAD(+) + H2O. The enzyme catalyses octanal + NAD(+) + H2O = octanoate + NADH + 2 H(+). The catalysed reaction is (2E)-hexadecenal + NAD(+) + H2O = (E)-hexadec-2-enoate + NADH + 2 H(+). It carries out the reaction 22-oxodocosanoate + NAD(+) + H2O = docosanedioate + NADH + 2 H(+). It catalyses the reaction 2,6,10,14-tetramethylpentadecanal + NAD(+) + H2O = 2,6,10,14-tetramethylpentadecanoate + NADH + 2 H(+). The enzyme catalyses octadecanal + NAD(+) + H2O = octadecanoate + NADH + 2 H(+). The catalysed reaction is dodecanoate + NADH + 2 H(+) = dodecanal + NAD(+) + H2O. It carries out the reaction decanal + NAD(+) + H2O = decanoate + NADH + 2 H(+). It catalyses the reaction tetradecanal + NAD(+) + H2O = tetradecanoate + NADH + 2 H(+). The enzyme catalyses heptanal + NAD(+) + H2O = heptanoate + NADH + 2 H(+). The catalysed reaction is (2E,6E)-farnesal + NAD(+) + H2O = (2E,6E)-farnesoate + NADH + 2 H(+). Functionally, catalyzes the oxidation of medium and long-chain aliphatic aldehydes to fatty acids. Active on a variety of saturated and unsaturated aliphatic aldehydes between 6 and 24 carbons in length. Responsible for conversion of the sphingosine 1-phosphate (S1P) degradation product hexadecenal to hexadecenoic acid. This is Aldehyde dehydrogenase family 3 member A2 (Aldh3a2) from Mus musculus (Mouse).